Reading from the N-terminus, the 734-residue chain is Sulfate transporter (734 aa).

Positions 1-18 (MSLKNEDQNDLSPKDSVK) are enriched in basic and acidic residues. The tract at residues 1 to 38 (MSLKNEDQNDLSPKDSVKGNDQYRAPSGIHLEPEEESR) is disordered. Residues S12 and S16 each carry the phosphoserine modification. Transmembrane regions (helical) follow at residues 113 to 133 (VMSG…YSLL) and 138 to 158 (PIYG…LGTS). A glycan (N-linked (GlcNAc...) asparagine) is linked at N194. 6 helical membrane-spanning segments follow: residues 214–234 (IIVG…MGFF), 237–257 (GFVS…GASF), 379–399 (VDAI…SEMF), 415–435 (AIGF…SAAL), 453–473 (VMTA…FFSL), and 519–539 (LIST…CVIL). Positions 563–714 (AYKNLQAKSG…YSIYEAMTFA (152 aa)) constitute an STAS domain.

This sequence belongs to the SLC26A/SulP transporter (TC 2.A.53) family. Post-translationally, N-glycosylated.

The protein resides in the cell membrane. Its subcellular location is the apical cell membrane. It catalyses the reaction oxalate(in) + sulfate(out) = oxalate(out) + sulfate(in). It carries out the reaction sulfate(out) + 2 chloride(in) = sulfate(in) + 2 chloride(out). The catalysed reaction is oxalate(out) + 2 chloride(in) = oxalate(in) + 2 chloride(out). The enzyme catalyses bromide(in) + chloride(out) = bromide(out) + chloride(in). It catalyses the reaction nitrate(in) + chloride(out) = nitrate(out) + chloride(in). It carries out the reaction iodide(in) + chloride(out) = iodide(out) + chloride(in). Its function is as follows. Sulfate transporter which mediates sulfate uptake into chondrocytes in order to maintain adequate sulfation of proteoglycans which is needed for cartilage development. Mediates electroneutral anion exchange of sulfate ions for oxalate ions, sulfate and oxalate ions for chloride and/or hydroxyl ions and chloride ions for bromide, iodide and nitrate ions. The coupling of sulfate transport to both hydroxyl and chloride ions likely serves to ensure transport at both acidic pH when most sulfate uptake is mediated by sulfate-hydroxide exchange and alkaline pH when most sulfate uptake is mediated by sulfate-chloride exchange. Essential for chondrocyte proliferation, differentiation and cell size expansion. The sequence is that of Sulfate transporter (SLC26A2) from Bos taurus (Bovine).